Consider the following 324-residue polypeptide: MSRERIKRELPPVQEHIDKLRKVIEEGNYYGALQMYKSISARYVTAQRFSEALDILFSGACIELEHGLVNCGADLAILFVDTLVKAKSPCNDETLDRIRCIFKLFPRVPVPPHLVDVSDDEDVQNLQESLGEARSRVENLTSFLRAAIKWSAEFGGPRTGYPELHAMLGDYLYTECPELDMVRISRHFVRAEDPEKFASMLVNFMGRCYPGEDDLAIARAVLMYLSMGNMKDANFMMDEIKKQAETKNPELSESDLIQFISYLLETLQRDALPLFNMLRVKYKSSIDRDQLLNELLDEIAERFYGVQRKNPLQGMFGDIFKMMG.

This sequence belongs to the GET4 family. In terms of assembly, interacts with GET3A.

Its subcellular location is the cytoplasm. It is found in the cytosol. Functionally, involved in the regulation of root hair growth. The polypeptide is Protein GET4 (Arabidopsis thaliana (Mouse-ear cress)).